Here is a 347-residue protein sequence, read N- to C-terminus: Guanine nucleotide-binding protein alpha-5 subunit (347 aa).

Glycine 2 carries the N-myristoyl glycine lipid modification. Cysteine 3 carries the S-palmitoyl cysteine lipid modification. Positions 27-347 constitute a G-alpha domain; the sequence is NETKLLLLGP…KNIFNTIINY (321 aa). Residues 30-43 form a G1 motif region; the sequence is KLLLLGPGESGKST. GTP is bound by residues 35 to 42, 170 to 176, 195 to 199, 264 to 267, and alanine 319; these read GPGESGKS, LRSRVRT, DVGGQ, and NKVD. 2 residues coordinate Mg(2+): serine 42 and threonine 176. The G2 motif stretch occupies residues 168 to 176; the sequence is DVLRSRVRT. Residues 191 to 200 are G3 motif; the sequence is FRMLDVGGQR. The G4 motif stretch occupies residues 260-267; sequence IIFFNKVD. A G5 motif region spans residues 317 to 322; sequence TCAIDT.

The protein belongs to the G-alpha family. G(q) subfamily. G proteins are composed of 3 units; alpha, beta and gamma. The alpha chain contains the guanine nucleotide binding site.

Its function is as follows. Guanine nucleotide-binding proteins (G proteins) are involved as modulators or transducers in various transmembrane signaling systems. In Dictyostelium discoideum (Social amoeba), this protein is Guanine nucleotide-binding protein alpha-5 subunit (gpaE).